The chain runs to 398 residues: MIQTISSSRPWSVNTPTALLVLADGTVIEGKGAGATGIAEAELCFNTAITGYEEILTDPSYTQQIVNFTFPHIGNVGANSEDIESLTPLSCHGAVGAIFKADITHPSNYRASENLHQWLKARKIIALCGIDTRALTILIREKGTQNAVIAHNSDGNFDIPSLKKRAQKWHGLVNLDLTEEVTSPSSIEWDEEPWCWNKGYGTNNVHNLHIVAIDYGIKRNILRLMATQKARITVVPAHTTAKEILAMTPDGVFLSNGPGDPAATAQYAIPTINTLIDHNLPIFGICLGHQLLALAVGAKTVKMHQGHHGANHPVKDLNSGKVEIVSMNHGFAVDAATLPKHVQETHISLFDGSNCGIRIIGKPVFSVQYHPEASPGPQDSHYLFQHFCDLIMNHKKIS.

A CPSase region spans residues 1–207 (MIQTISSSRP…KGYGTNNVHN (207 aa)). L-glutamine contacts are provided by Ser60, Gly257, and Gly259. Residues 209-397 (HIVAIDYGIK…CDLIMNHKKI (189 aa)) enclose the Glutamine amidotransferase type-1 domain. Catalysis depends on Cys286, which acts as the Nucleophile. L-glutamine contacts are provided by Leu287, Gln290, Asn328, Gly330, and Phe331. Residues His370 and Glu372 contribute to the active site.

The protein belongs to the CarA family. Composed of two chains; the small (or glutamine) chain promotes the hydrolysis of glutamine to ammonia, which is used by the large (or ammonia) chain to synthesize carbamoyl phosphate. Tetramer of heterodimers (alpha,beta)4.

The enzyme catalyses hydrogencarbonate + L-glutamine + 2 ATP + H2O = carbamoyl phosphate + L-glutamate + 2 ADP + phosphate + 2 H(+). The catalysed reaction is L-glutamine + H2O = L-glutamate + NH4(+). It functions in the pathway amino-acid biosynthesis; L-arginine biosynthesis; carbamoyl phosphate from bicarbonate: step 1/1. It participates in pyrimidine metabolism; UMP biosynthesis via de novo pathway; (S)-dihydroorotate from bicarbonate: step 1/3. In terms of biological role, small subunit of the glutamine-dependent carbamoyl phosphate synthetase (CPSase). CPSase catalyzes the formation of carbamoyl phosphate from the ammonia moiety of glutamine, carbonate, and phosphate donated by ATP, constituting the first step of 2 biosynthetic pathways, one leading to arginine and/or urea and the other to pyrimidine nucleotides. The small subunit (glutamine amidotransferase) binds and cleaves glutamine to supply the large subunit with the substrate ammonia. In Bartonella tribocorum (strain CIP 105476 / IBS 506), this protein is Carbamoyl phosphate synthase small chain.